The following is a 189-amino-acid chain: MKQSSPTYLKHHFLIAMPHMADPNFAQTVTYLVEHNDQGAMGLVINRPSGLNLAEVLEQLKPDVLPPARCQHIEIYNGGPVQTDRGFVLHPSGLAYQSTLELGELAMSTSQDVLFAIAAGTGPEKSLISLGYAGWEAGQLEAELSDNAWLTCPADPAILFDLPAEERLSAAAACLGVNLSLLTAQAGHA.

It belongs to the UPF0301 (AlgH) family.

The sequence is that of UPF0301 protein PSPA7_0505 from Pseudomonas paraeruginosa (strain DSM 24068 / PA7) (Pseudomonas aeruginosa (strain PA7)).